Consider the following 457-residue polypeptide: MMIRGHKLKIAEGDIPIAGVKSSRIYSDVSPFRKASDLMIHWNEFVFKVMPEDIAGDGFRLASIPVIPSSEVQAVLRKRESTNYVHWGALSISIDALFRKNAGVSGWCYVYDNRWETFEQAMLQKFRFNLDSGSATLVTSPNFPVSLDDPGLSNSISVAVMFENLNFKLESYPISVRVGNMCRFFDSFLSCVKNKVDSNFLLEAANADPLGAGAFGFEQDDQVSELFNYIQTVPTQAIKSREHEVPRGLFGMMGKKKVKSFEFASGSRNLGRRKPQRGRPLERSASLRVAPGFRSQDERVEHQGLSTDSDFENFLRKGKGKAGTESITSEGSSFDNISAREFQFARQDQKAKDGGSAEPPIKSGRRSESVPGRRRQTPSWKDRGNSGTDTGGHLREHSDTGDLGTNRVPGRAGGGEIHGGSEGGGVIQSEGGSRFDQNIQDYIFGPEYKQHDLPPSV.

Disordered regions lie at residues 265-284, 293-312, and 345-457; these read SGSRNLGRRKPQRGRPLERS, FRSQDERVEHQGLSTDSDFE, and ARQD…PPSV. Positions 411–426 are enriched in gly residues; it reads RAGGGEIHGGSEGGGV. The segment covering 448 to 457 has biased composition (basic and acidic residues); it reads YKQHDLPPSV.

The protein belongs to the tobamoviruses movement protein family.

Its function is as follows. Suppressor of viral-induced RNA silencing. This is Putative movement protein from Crataegus (hawthorn).